Here is a 728-residue protein sequence, read N- to C-terminus: Homoaconitase, mitochondrial (728 aa).

A mitochondrion-targeting transit peptide spans 1 to 24; that stretch reads MVAIPRLARLSVPAWALSARGRFY. 3 residues coordinate [4Fe-4S] cluster: cysteine 362, cysteine 422, and cysteine 425.

The protein belongs to the aconitase/IPM isomerase family. [4Fe-4S] cluster serves as cofactor.

It is found in the mitochondrion. It carries out the reaction (2R,3S)-homoisocitrate = cis-homoaconitate + H2O. It participates in amino-acid biosynthesis; L-lysine biosynthesis via AAA pathway; L-alpha-aminoadipate from 2-oxoglutarate: step 3/5. Catalyzes the reversible hydration of cis-homoaconitate to (2R,3S)-homoisocitrate, a step in the alpha-aminoadipate pathway for lysine biosynthesis. The polypeptide is Homoaconitase, mitochondrial (LYS4) (Cryptococcus neoformans var. neoformans serotype D (strain B-3501A) (Filobasidiella neoformans)).